Reading from the N-terminus, the 366-residue chain is Uroporphyrinogen decarboxylase (366 aa).

Residues R28–R32, D78, Y160, T215, and H333 each bind substrate.

This sequence belongs to the uroporphyrinogen decarboxylase family. In terms of assembly, homodimer.

It is found in the cytoplasm. The enzyme catalyses uroporphyrinogen III + 4 H(+) = coproporphyrinogen III + 4 CO2. Its pathway is porphyrin-containing compound metabolism; protoporphyrin-IX biosynthesis; coproporphyrinogen-III from 5-aminolevulinate: step 4/4. Functionally, catalyzes the decarboxylation of four acetate groups of uroporphyrinogen-III to yield coproporphyrinogen-III. The chain is Uroporphyrinogen decarboxylase from Paraburkholderia xenovorans (strain LB400).